The following is a 180-amino-acid chain: MKIKKTAGRQLAPNRINEEITGVPEVRLTGIDGEAIGVVSIRDAQNLADEAGVDLVEISPNAEPPVCRIMDYGKFLFDKAKSAKEQKKKQKQVQVKEIKFRPGTDENDYQVKLRNLIRFLEDGDKAKITLRFRGREMAHQNLGMDLLNRIKTDLDEYAVVESFPKMEGRQAIMVLAPKKK.

This sequence belongs to the IF-3 family. Monomer.

It localises to the cytoplasm. IF-3 binds to the 30S ribosomal subunit and shifts the equilibrium between 70S ribosomes and their 50S and 30S subunits in favor of the free subunits, thus enhancing the availability of 30S subunits on which protein synthesis initiation begins. This chain is Translation initiation factor IF-3, found in Shewanella oneidensis (strain ATCC 700550 / JCM 31522 / CIP 106686 / LMG 19005 / NCIMB 14063 / MR-1).